A 130-amino-acid chain; its full sequence is Phosphoribosyl-AMP cyclohydrolase (130 aa).

Residue D77 participates in Mg(2+) binding. Residue C78 participates in Zn(2+) binding. Mg(2+) contacts are provided by D79 and D81. Residues C95 and C102 each coordinate Zn(2+).

This sequence belongs to the PRA-CH family. Homodimer. Mg(2+) serves as cofactor. Requires Zn(2+) as cofactor.

It is found in the cytoplasm. It carries out the reaction 1-(5-phospho-beta-D-ribosyl)-5'-AMP + H2O = 1-(5-phospho-beta-D-ribosyl)-5-[(5-phospho-beta-D-ribosylamino)methylideneamino]imidazole-4-carboxamide. It functions in the pathway amino-acid biosynthesis; L-histidine biosynthesis; L-histidine from 5-phospho-alpha-D-ribose 1-diphosphate: step 3/9. In terms of biological role, catalyzes the hydrolysis of the adenine ring of phosphoribosyl-AMP. This Pseudomonas putida (strain ATCC 700007 / DSM 6899 / JCM 31910 / BCRC 17059 / LMG 24140 / F1) protein is Phosphoribosyl-AMP cyclohydrolase.